The chain runs to 507 residues: ATP synthase subunit alpha, chloroplastic (507 aa).

Residue 170–177 (GDRQTGKT) coordinates ATP. Thr-257 is modified (phosphothreonine).

This sequence belongs to the ATPase alpha/beta chains family. F-type ATPases have 2 components, CF(1) - the catalytic core - and CF(0) - the membrane proton channel. CF(1) has five subunits: alpha(3), beta(3), gamma(1), delta(1), epsilon(1). CF(0) has four main subunits: a, b, b' and c.

It is found in the plastid. The protein localises to the chloroplast thylakoid membrane. It carries out the reaction ATP + H2O + 4 H(+)(in) = ADP + phosphate + 5 H(+)(out). In terms of biological role, produces ATP from ADP in the presence of a proton gradient across the membrane. The alpha chain is a regulatory subunit. The sequence is that of ATP synthase subunit alpha, chloroplastic from Crucihimalaya wallichii (Rock-cress).